The chain runs to 373 residues: Lipoyl amidotransferase LIPT1, mitochondrial (373 aa).

Residues 1-25 (MLIPFSMKNCFQLLCNCQVPAAGFK) constitute a mitochondrion transit peptide. The region spanning 57 to 243 (LEGKPILFFW…EYAAYHQIDN (187 aa)) is the BPL/LPL catalytic domain. (R)-lipoyl-5'-AMP contacts are provided by Tyr-107, Arg-151, Lys-161, and Thr-179.

The protein belongs to the LplA family. As to expression, highly expressed in skeletal muscle and heart, moderately in kidney and pancreas, and detected at lower levels in liver, brain, placenta and lung.

It localises to the mitochondrion. It carries out the reaction N(6)-[(R)-lipoyl]-L-lysyl-[glycine-cleavage complex H protein] + L-lysyl-[lipoyl-carrier protein] = L-lysyl-[glycine-cleavage complex H protein] + N(6)-[(R)-lipoyl]-L-lysyl-[lipoyl-carrier protein]. The catalysed reaction is (R)-lipoyl-5'-AMP + L-lysyl-[lipoyl-carrier protein] = N(6)-[(R)-lipoyl]-L-lysyl-[lipoyl-carrier protein] + AMP + 2 H(+). It participates in protein modification; protein lipoylation via exogenous pathway; protein N(6)-(lipoyl)lysine from lipoate: step 2/2. In terms of biological role, lipoyl amidotransferase that catalyzes the transfer of lipoyl moieties from lipoyl-protein H of the glycine cleavage system (lipoyl-GCSH) to E2 subunits of the pyruvate dehydrogenase complex (PDCE2). Unable to catalyze the transfer of octanoyl from octanoyl-GCSH to PDCE2. In vitro, it is also able to catalyze the transfer of the lipoyl group from lipoyl-AMP to the specific lysine residue of lipoyl domains of lipoate-dependent enzymes but this reaction may not be physiologically relevant. In Homo sapiens (Human), this protein is Lipoyl amidotransferase LIPT1, mitochondrial.